Consider the following 239-residue polypeptide: Bradykinin-potentiating and C-type natriuretic peptides (239 aa).

Residues 1 to 23 (MFVSRLAASGLLLLALLAVSLDG) form the signal peptide. Propeptides lie at residues 24–33 (KPVQQWSHKG) and 43–49 (LVVQQWS). Gln50 bears the Pyrrolidone carboxylic acid mark. A propeptide spanning residues 62–64 (VVV) is cleaved from the precursor. A Pyrrolidone carboxylic acid modification is found at Gln65. The propeptide occupies 76–82 (LVVQQWS). Pyrrolidone carboxylic acid is present on Gln83. Residues 95–97 (LVV) constitute a propeptide that is removed on maturation. Gln98 carries the pyrrolidone carboxylic acid modification. 2 consecutive propeptides follow at residues 109–136 (LLKP…AALD) and 148–217 (GSKA…LAKK). A disordered region spans residues 132 to 205 (EAALDTPPAG…HHAVGGGGGG (74 aa)). The segment covering 161 to 171 (SKGASATSAAS) has biased composition (low complexity). The span at 173–183 (PMRDLRTDGKQ) shows a compositional bias: basic and acidic residues. Residues Cys223 and Cys239 are joined by a disulfide bond.

It in the N-terminal section; belongs to the bradykinin-potentiating peptide family. This sequence in the central section; belongs to the bradykinin inhibitor peptide family. The protein in the C-terminal section; belongs to the natriuretic peptide family. In terms of tissue distribution, expressed by the venom gland.

It is found in the secreted. In terms of biological role, bradykinin-potentiating peptides both inhibit the activity of the angiotensin-converting enzyme (ACE) and enhances the action of bradykinin by inhibiting the peptidases that inactivate it. They act as indirect hypotensive agent. Its function is as follows. inhibits angiotensin-converting enzyme (ACE) activity (IC(50)=4.25 uM), preventing the release of angiotensin and thus indirectly contributing to hypotension. In vivo, induce hypotensive response in both normotensive and hypertensive rats. Antagonizes the vasodilatory actions of bradykinin at the B2 bradykinin receptor (BDKRB2). Functionally, has a vasorelaxant activity in rat aortic strips and a diuretic potency in anesthetized rats. May act by activating natriuretic receptors (NPR1 and/or NPR2). This chain is Bradykinin-potentiating and C-type natriuretic peptides, found in Lachesis muta muta (Bushmaster).